Reading from the N-terminus, the 72-residue chain is uncharacterized protein (72 aa).

A signal peptide spans M1–A17.

This is an uncharacterized protein from Schizosaccharomyces pombe (strain 972 / ATCC 24843) (Fission yeast).